We begin with the raw amino-acid sequence, 403 residues long: Alkaline protease 1 (403 aa).

Residues 1–21 (MQSIKRTLLLLGAVLPAVLAG) form the signal peptide. The propeptide occupies 22–121 (PIFPHRRAPT…VEEDQVWHLF (100 aa)). Positions 36–120 (KYIVTFKSDV…AVEEDQVWHL (85 aa)) constitute an Inhibitor I9 domain. The Peptidase S8 domain maps to 130–403 (PWGLGSISHK…PNLLAYNGNA (274 aa)). Catalysis depends on charge relay system residues aspartate 162 and histidine 193. 2 N-linked (GlcNAc...) asparagine glycosylation sites follow: asparagine 253 and asparagine 309. Catalysis depends on serine 349, which acts as the Charge relay system.

This sequence belongs to the peptidase S8 family.

The protein localises to the secreted. The catalysed reaction is Hydrolysis of proteins with broad specificity, and of Bz-Arg-OEt &gt; Ac-Tyr-OEt. Does not hydrolyze peptide amides.. Secreted alkaline protease that allows assimilation of proteinaceous substrates. This chain is Alkaline protease 1 (alp1), found in Aspergillus flavus.